A 392-amino-acid chain; its full sequence is G2/mitotic-specific cyclin-B (392 aa).

This sequence belongs to the cyclin family. Cyclin AB subfamily.

Functionally, essential for the control of the cell cycle at the G2/M (mitosis) transition. Interacts with the CDC2 protein kinase to form MPF. G2/M cyclins accumulate steadily during G2 and are abruptly destroyed at mitosis. This chain is G2/mitotic-specific cyclin-B, found in Hydra viridissima (Green hydra).